The sequence spans 493 residues: Probable cytochrome P450 508A2 (493 aa).

Residues 1 to 21 traverse the membrane as a helical segment; it reads MIFGIIVYLFLIYILHNAYSK. Residue Cys439 participates in heme binding.

Belongs to the cytochrome P450 family. It depends on heme as a cofactor.

It is found in the membrane. This chain is Probable cytochrome P450 508A2 (cyp508A2-1), found in Dictyostelium discoideum (Social amoeba).